Here is a 218-residue protein sequence, read N- to C-terminus: Glutathione S-transferase Mu 1 (218 aa).

The region spanning 2 to 88 (PMTLGYWDVR…YLARKHGLCG (87 aa)) is the GST N-terminal domain. Glutathione-binding positions include 7-8 (YW), 46-50 (WLSEK), 59-60 (NL), and 72-73 (QS). Residues 90 to 208 (TEEERIRVDI…KSSRFIRVPV (119 aa)) form the GST C-terminal domain. Tyr116 serves as a coordination point for substrate.

This sequence belongs to the GST superfamily. Mu family. Homodimer. In terms of tissue distribution, well expressed in rabbit liver, brain and kidney.

It is found in the cytoplasm. The catalysed reaction is RX + glutathione = an S-substituted glutathione + a halide anion + H(+). In terms of biological role, conjugation of reduced glutathione to a wide number of exogenous and endogenous hydrophobic electrophiles. The chain is Glutathione S-transferase Mu 1 from Oryctolagus cuniculus (Rabbit).